The primary structure comprises 249 residues: Probable aquaporin TIP-type (249 aa).

A run of 2 helical transmembrane segments spans residues 22–42 and 56–76; these read AGLA…GSGI and AGLI…VSVG. Positions 85-87 match the NPA 1 motif; the sequence is NPA. 3 helical membrane-spanning segments follow: residues 103 to 123, 137 to 157, and 169 to 189; these read IVYI…LVFV, VGVG…VYTV, and IGII…LVGG. An NPA 2 motif is present at residues 197 to 199; that stretch reads NPA. Residues 217 to 237 traverse the membrane as a helical segment; that stretch reads YWAGPLIGGGIAGLVYEVLFI.

This sequence belongs to the MIP/aquaporin (TC 1.A.8) family. TIP (TC 1.A.8.10) subfamily. In terms of tissue distribution, expression is highest in root tips, with slightly lower levels of hybridizing mRNA in stems, and whole roots, and much lower levels in nodules and leaves.

The protein resides in the membrane. Its function is as follows. Aquaporins facilitate the transport of water and small neutral solutes across cell membranes. The protein is Probable aquaporin TIP-type (MCP1) of Medicago sativa (Alfalfa).